The following is a 660-amino-acid chain: Squalene--hopene cyclase (660 aa).

The stretch at 73-114 is one PFTB 1 repeat; that stretch reads EAKIGNYLRRVQGAHGGWPLVHDGEFDMSASVKAYFALKMIG. Asp394 acts as the Proton donor in catalysis. PFTB repeat units lie at residues 419–460 and 536–586; these read IDRG…GALL and IRKA…ALMA.

The protein belongs to the terpene cyclase/mutase family.

It localises to the cell membrane. It carries out the reaction squalene = hop-22(29)-ene. It catalyses the reaction squalene + H2O = hopan-22-ol. It functions in the pathway secondary metabolite biosynthesis; hopanoid biosynthesis. In terms of biological role, catalyzes the cyclization of squalene into hopene. In Bradyrhizobium diazoefficiens (strain JCM 10833 / BCRC 13528 / IAM 13628 / NBRC 14792 / USDA 110), this protein is Squalene--hopene cyclase (shc).